The sequence spans 339 residues: Transcription initiation factor IIB (339 aa).

Residues 39–70 form a TFIIB-type zinc finger; sequence EELICPVCGSKNIIKDYERAEIVCEMCGCVLQ. Residues Cys43, Cys46, Cys62, and Cys65 each contribute to the Zn(2+) site. A run of 2 repeats spans residues 156 to 239 and 250 to 331.

It belongs to the TFIIB family.

In terms of biological role, stabilizes TBP binding to an archaeal box-A promoter. Also responsible for recruiting RNA polymerase II to the pre-initiation complex (DNA-TBP-TFIIB). This Methanococcus maripaludis (strain C6 / ATCC BAA-1332) protein is Transcription initiation factor IIB.